The sequence spans 852 residues: Bifunctional uridylyltransferase/uridylyl-removing enzyme (852 aa).

The tract at residues 1 to 318 is uridylyltransferase; the sequence is MPENLSSALE…STPVRVTLRI (318 aa). The interval 319 to 672 is uridylyl-removing; that stretch reads DDDYIQVNNQ…SRILPQSDSF (354 aa). An HD domain is found at 436–558; the sequence is VDDHILAVVR…VQTHERLSAL (123 aa). ACT domains lie at 673–757 and 785–852; these read QVMV…SCNR and SVEI…EQLA.

This sequence belongs to the GlnD family. Mg(2+) is required as a cofactor.

It carries out the reaction [protein-PII]-L-tyrosine + UTP = [protein-PII]-uridylyl-L-tyrosine + diphosphate. It catalyses the reaction [protein-PII]-uridylyl-L-tyrosine + H2O = [protein-PII]-L-tyrosine + UMP + H(+). With respect to regulation, uridylyltransferase (UTase) activity is inhibited by glutamine, while glutamine activates uridylyl-removing (UR) activity. In terms of biological role, modifies, by uridylylation and deuridylylation, the PII regulatory proteins (GlnB and homologs), in response to the nitrogen status of the cell that GlnD senses through the glutamine level. Under low glutamine levels, catalyzes the conversion of the PII proteins and UTP to PII-UMP and PPi, while under higher glutamine levels, GlnD hydrolyzes PII-UMP to PII and UMP (deuridylylation). Thus, controls uridylylation state and activity of the PII proteins, and plays an important role in the regulation of nitrogen assimilation and metabolism. In Neisseria gonorrhoeae (strain ATCC 700825 / FA 1090), this protein is Bifunctional uridylyltransferase/uridylyl-removing enzyme.